A 312-amino-acid chain; its full sequence is Non-structural protein 12A (312 aa).

Positions 1-23 (MFKSGSGSLKRSGSISSVKSFSG) are enriched in low complexity. 3 disordered regions span residues 1-37 (MFKSGSGSLKRSGSISSVKSFSGDSEKGLPPISRGSV), 62-99 (FVPEKTKSEGNLKDKSSVITGNFGSSGPINAHTNQNAD), and 111-161 (ESSK…GTGD). A compositionally biased stretch (basic and acidic residues) spans 63–77 (VPEKTKSEGNLKDKS). A compositionally biased stretch (polar residues) spans 78–98 (SVITGNFGSSGPINAHTNQNA). Basic and acidic residues predominate over residues 122–134 (DARHTATDSRLSQ).

It belongs to the phytoreovirus non-structural protein Pns12A family.

It is found in the host cytoplasm. Its function is as follows. Constituent of viral factories. Binds to ssRNA and dsRNA. In Alopecurus aequalis (Barnyard grass), this protein is Non-structural protein 12A.